The sequence spans 341 residues: Brain-specific homeobox/POU domain protein 3 (341 aa).

The POU-IV box motif lies at 55–65 (RGAEALAAVDI). The region spanning 182–259 (ETETDPRELE…ILEAWLEEAE (78 aa)) is the POU-specific domain. The segment at residues 277–336 (KKRKRTSIAAPEKRSLEAYFAVQPRPSSEKIAAIAEKLDLKKNVVRVWFCNQRQKQKRMK) is a DNA-binding region (homeobox).

It belongs to the POU transcription factor family. Class-4 subfamily.

It localises to the nucleus. May play a role in specifying terminally differentiated neuronal phenotypes. The chain is Brain-specific homeobox/POU domain protein 3 (BRN3) from Gallus gallus (Chicken).